Consider the following 149-residue polypeptide: Putative pre-16S rRNA nuclease (149 aa).

The protein belongs to the YqgF nuclease family.

It is found in the cytoplasm. In terms of biological role, could be a nuclease involved in processing of the 5'-end of pre-16S rRNA. This chain is Putative pre-16S rRNA nuclease, found in Burkholderia ambifaria (strain MC40-6).